Consider the following 1184-residue polypeptide: DNA-directed RNA polymerase subunit beta' (1184 aa).

Residues C60, C62, C75, and C78 each contribute to the Zn(2+) site. Mg(2+)-binding residues include D449, D451, and D453. Zn(2+) is bound by residues C794, C867, C874, and C877.

Belongs to the RNA polymerase beta' chain family. In terms of assembly, the RNAP catalytic core consists of 2 alpha, 1 beta, 1 beta' and 1 omega subunit. When a sigma factor is associated with the core the holoenzyme is formed, which can initiate transcription. Mg(2+) serves as cofactor. It depends on Zn(2+) as a cofactor.

The enzyme catalyses RNA(n) + a ribonucleoside 5'-triphosphate = RNA(n+1) + diphosphate. Functionally, DNA-dependent RNA polymerase catalyzes the transcription of DNA into RNA using the four ribonucleoside triphosphates as substrates. The sequence is that of DNA-directed RNA polymerase subunit beta' from Thermoanaerobacter sp. (strain X514).